Reading from the N-terminus, the 283-residue chain is Formamidopyrimidine-DNA glycosylase (283 aa).

Residue proline 2 is the Schiff-base intermediate with DNA of the active site. Residue glutamate 3 is the Proton donor of the active site. The active-site Proton donor; for beta-elimination activity is the lysine 61. Positions 94, 113, and 159 each coordinate DNA. The segment at 245–279 adopts an FPG-type zinc-finger fold; that stretch reads DAYGREGESCRRCGAVMRREKFMNRSSFYCPKCQP. The Proton donor; for delta-elimination activity role is filled by arginine 269.

This sequence belongs to the FPG family. In terms of assembly, monomer. It depends on Zn(2+) as a cofactor.

It catalyses the reaction Hydrolysis of DNA containing ring-opened 7-methylguanine residues, releasing 2,6-diamino-4-hydroxy-5-(N-methyl)formamidopyrimidine.. The enzyme catalyses 2'-deoxyribonucleotide-(2'-deoxyribose 5'-phosphate)-2'-deoxyribonucleotide-DNA = a 3'-end 2'-deoxyribonucleotide-(2,3-dehydro-2,3-deoxyribose 5'-phosphate)-DNA + a 5'-end 5'-phospho-2'-deoxyribonucleoside-DNA + H(+). In terms of biological role, involved in base excision repair of DNA damaged by oxidation or by mutagenic agents. Acts as a DNA glycosylase that recognizes and removes damaged bases. Has a preference for oxidized purines, such as 7,8-dihydro-8-oxoguanine (8-oxoG). Has AP (apurinic/apyrimidinic) lyase activity and introduces nicks in the DNA strand. Cleaves the DNA backbone by beta-delta elimination to generate a single-strand break at the site of the removed base with both 3'- and 5'-phosphates. The chain is Formamidopyrimidine-DNA glycosylase from Mycobacterium avium (strain 104).